Consider the following 270-residue polypeptide: MIIKLYKIEPTSTLTRNGTSQAKPKNLISGKRNCGKGRNANGIITIRHRGGGHKRLCRKINFKRNEKDISGKIKTIEYDPNRNAYICLIHYVNGEKWYILHPRGALIGDTIISGPEVSIKIGNSLPLNEIPLGTSLHNLEITRGKGGQLARAAGAAAKLIAKEGQSATLKLPSGELRFISKQCSATVGQVGNIGVNQKSLGKAGVKRWLGKRPIVRGLVMNPIDHPHGGGEGRAPIGRNQPKTPWGYPALGKKTRRKNKYSNKFILRHRM.

The disordered stretch occupies residues 221–245; sequence NPIDHPHGGGEGRAPIGRNQPKTPW.

Belongs to the universal ribosomal protein uL2 family. In terms of assembly, part of the 50S ribosomal subunit.

It localises to the plastid. In Cuscuta gronovii (Common dodder), this protein is Large ribosomal subunit protein uL2c (rpl2).